A 383-amino-acid polypeptide reads, in one-letter code: Histidinol-phosphate aminotransferase (383 aa).

Residue Lys-240 is modified to N6-(pyridoxal phosphate)lysine.

The protein belongs to the class-II pyridoxal-phosphate-dependent aminotransferase family. Histidinol-phosphate aminotransferase subfamily. As to quaternary structure, homodimer. Pyridoxal 5'-phosphate serves as cofactor.

It catalyses the reaction L-histidinol phosphate + 2-oxoglutarate = 3-(imidazol-4-yl)-2-oxopropyl phosphate + L-glutamate. The protein operates within amino-acid biosynthesis; L-histidine biosynthesis; L-histidine from 5-phospho-alpha-D-ribose 1-diphosphate: step 7/9. The sequence is that of Histidinol-phosphate aminotransferase from Oleidesulfovibrio alaskensis (strain ATCC BAA-1058 / DSM 17464 / G20) (Desulfovibrio alaskensis).